Consider the following 500-residue polypeptide: Transcription termination/antitermination protein NusA (500 aa).

The S1 motif domain maps to 135–205; the sequence is GEIVTGVVKK…RGAQLFVTRS (71 aa). Residues 307-373 form the KH domain; the sequence is KHTMDIAVEA…FTKYLDIDEE (67 aa). 2 consecutive repeat copies span residues 369–419 and 444–494. The segment at 369-494 is 2 X 51 AA approximate repeats; it reads DIDEEFATVL…ELIMAARNIC (126 aa).

It belongs to the NusA family. As to quaternary structure, monomer. Binds directly to the core enzyme of the DNA-dependent RNA polymerase and to nascent RNA.

The protein resides in the cytoplasm. Its function is as follows. Participates in both transcription termination and antitermination. The chain is Transcription termination/antitermination protein NusA from Salmonella typhimurium (strain LT2 / SGSC1412 / ATCC 700720).